The chain runs to 380 residues: Outer membrane protein 40 (380 aa).

Positions 1 to 21 are cleaved as a signal peptide; sequence MKAKSLLLALAGLACTFSATA. Gln22 is modified (pyrrolidone carboxylic acid). The OmpA-like domain occupies 270 to 380; the sequence is PTVTRVVVDN…NRIVVMTAAE (111 aa).

It belongs to the outer membrane OOP (TC 1.B.6) superfamily. Disulfide-linked heterodimer with Omp41.

The protein localises to the cell outer membrane. In terms of biological role, may have porin activity and function in peptidoglycan binding. The chain is Outer membrane protein 40 from Porphyromonas gingivalis (strain ATCC BAA-308 / W83).